The primary structure comprises 612 residues: Siderophore iron transporter 1 (612 aa).

Residues Ser-5, Ser-21, Ser-22, Ser-36, and Ser-41 each carry the phosphoserine modification. 14 helical membrane passes run 91–111 (ISFYICYFSIFLLFFAISFQA), 125–145 (FAGHSLLSTIAVANNIISAAI), 159–179 (LEAFLFSLLLYLVGLILMAAS), 188–208 (GSVLYNAGYTGVELIMTIFMA), 218–238 (LVLGISYLPFVVTIWIGPRVA), 249–269 (WGIAVWTILIPACSIPFLAVY), 299–319 (IIGLILMTAGLALVLLSISLA), 331–351 (FIVMIIIGGLCLIAFVLYEIF), 365–385 (EPTIGACCAMSFLFYITFYCW), 406–426 (YISYTYSFTSCATGFFLGILI), 434–453 (WYFVASIPVYILGQGLMIRY), 464–484 (IMPQIIVGIGGGVIANLLTVA), 495–515 (AIVTALVSTVTPIGGAVGSAI), and 573–593 (ILTSVATGFAGAMIFPVWFVA).

The protein belongs to the major facilitator superfamily.

The protein resides in the membrane. Involved in the transport of siderophore iron and so has a role in iron homeostasis. This chain is Siderophore iron transporter 1 (str1), found in Schizosaccharomyces pombe (strain 972 / ATCC 24843) (Fission yeast).